The sequence spans 70 residues: uncharacterized protein (70 aa).

This is an uncharacterized protein from Escherichia coli (strain K12).